The chain runs to 656 residues: Pyoverdine export ATP-binding/permease protein PvdT (656 aa).

Residues 6-245 (IDLRAIRKSY…SANPAALQAV (240 aa)) enclose the ABC transporter domain. 43-50 (GASGSGKS) provides a ligand contact to ATP. A run of 4 helical transmembrane segments spans residues 284-304 (ALTL…LAVG), 538-558 (IAAI…LMTV), 589-609 (LSVV…AALL), and 619-639 (VPAV…FGFM).

Belongs to the ABC transporter superfamily. Macrolide exporter (TC 3.A.1.122) family. Part of the tripartite efflux system PvdRT-OpmQ, which is composed of an inner membrane component with both ATPase and permease domains, PvdT, a periplasmic membrane fusion protein, PvdR, and an outer membrane component, OpmQ.

The protein localises to the cell inner membrane. In terms of biological role, part of the tripartite efflux system PvdRT-OpmQ required for the secretion into the extracellular milieu of the siderophore pyoverdine (PVD), which is involved in iron acquisition. This subunit binds PVD and drives its secretion by hydrolyzing ATP. The system is responsible for export of newly synthesized PVD after the final steps of biosynthesis have taken place in the periplasm. It is also responsible for recycling of PVD after internalization of ferri-PVD into the periplasm by the outer-membrane receptor FpvA and release of iron from PVD, thus making PVD available for new cycles of iron uptake. This chain is Pyoverdine export ATP-binding/permease protein PvdT, found in Pseudomonas savastanoi pv. phaseolicola (strain 1448A / Race 6) (Pseudomonas syringae pv. phaseolicola (strain 1448A / Race 6)).